A 370-amino-acid polypeptide reads, in one-letter code: Protein DVU_0535 (370 aa).

At Met1–Glu258 the chain is on the cytoplasmic side. 4Fe-4S ferredoxin-type domains follow at residues Tyr40 to Ala70, Asp101 to Asp132, and Gly133 to Ala162. Positions 49, 52, 55, 59, 110, 113, 118, 122, 142, 145, 148, 152, 172, 175, 187, and 191 each coordinate [4Fe-4S] cluster. The chain crosses the membrane as a helical span at residues Tyr259–Ile284. The Periplasmic segment spans residues Thr285–Ala370. Over residues Phe345–Pro355 the composition is skewed to basic and acidic residues. Positions Phe345–Ala370 are disordered.

The protein localises to the cell membrane. Functionally, HMWC (high-molecular-weight cytochrome c precursor), ORF2, ORF3, ORF4, ORF5, ORF6 in the HMC operon form a transmembrane protein complex that allows electron flow from the periplasmic hydrogenase to the cytoplasmic enzymes that catalyze reduction of sulfates. ORF2 is a transmembrane redox protein. The protein is Protein DVU_0535 of Nitratidesulfovibrio vulgaris (strain ATCC 29579 / DSM 644 / CCUG 34227 / NCIMB 8303 / VKM B-1760 / Hildenborough) (Desulfovibrio vulgaris).